The following is a 548-amino-acid chain: MASKEIVFDTKARERLARGVDKLANAVKVTLGPKGRNVVIEKSFGAPVITKDGVSVAKEIELEDKFENMGAQMVKEVASKTSDIAGDGTTTATILAQAIYKEGVKLVAAGRNPMAIKRGVDKAVEALVKELGNLAKPTRDQKEIAQVGTISANSDTTIGNIIAEAMSKVGKEGVITVEEAKGLETTLEVVEGMQFDRGYLSPYFVTDPEKMVCEMDEPLILINEKKISSMKDMLPVLEQVAKMNRPLVIIAEDVDGEALATLVVNKLRGTLQVVAVKAPGFGERRKAMLEDIATLTGGRVISEEMGIKLENATVADLGNAKRIVVDKENTTIVDGAGESEAIKARVKMIRAQIEETSSDYDREKLQERLAKIVGGVAVINVGAATETEMKEKKDRVEDALNATRAAVEEGIVPGGGTALVRCCKVLDDVKPADDDEAAGVTIIRRAIEEPLRQIAANAGFEGSIICEKVKEGKDAFGFNAATGEFEDLIAAGVIDPKKVSRIALQNAASVASLLLTTECAIAEKPKEDAPAAPAMGGMGGMGGMGGMY.

Residues 30–33 (TLGP), Lys51, 87–91 (DGTTT), Gly415, 479–481 (NAA), and Asp495 contribute to the ATP site.

It belongs to the chaperonin (HSP60) family. In terms of assembly, forms a cylinder of 14 subunits composed of two heptameric rings stacked back-to-back. Interacts with the co-chaperonin GroES.

The protein resides in the cytoplasm. The enzyme catalyses ATP + H2O + a folded polypeptide = ADP + phosphate + an unfolded polypeptide.. Its function is as follows. Together with its co-chaperonin GroES, plays an essential role in assisting protein folding. The GroEL-GroES system forms a nano-cage that allows encapsulation of the non-native substrate proteins and provides a physical environment optimized to promote and accelerate protein folding. This Oleidesulfovibrio alaskensis (strain ATCC BAA-1058 / DSM 17464 / G20) (Desulfovibrio alaskensis) protein is Chaperonin GroEL.